Here is a 580-residue protein sequence, read N- to C-terminus: MKHAHLIVPRTLVAGSASGELLYAPTGLSFWGGVDPRSAEVIDRHHPLSGRHLHGRLLAIPGGRGSCTGSSVLLELILGGRAPAAILLREPDEILALGAIVAEELFGRSLPIACLGERFDELAAYPWARLADGRLELHRDAPPPLEARPAEALATDAGPRLDAFDQALLAGEHGEAARLAMRIVLRMAALQGAQRLIDIQRAHIDACIYTGPAGLRFAETLRDLGARVRVPTTLNAISVDQRRWREQGVPAALGEPAAALARAYLDMGAQPSFTCAPYLLDDSARAGEQIVWAESNAVLFANSVLGARTNKYADFMDICCALTGRAPLAGCHLDEQRQARVLIEVEDLGSVDDAFYPTLGYLCGLLCDGQIPAIDGLRQRQPDHDALKAFGAALGTSSSVPMFHVIGVTPEAPDLASAFGGRAPRRTLRVGRERLRDAWRELDSAGETRIDLVALGNPHFSASEFAQLAALCHGRRRHPEVALVITSSRQVVAQAEAAGHLATLQAFGARLVTDTCWCMLDEPLVPPGARTLMTNSAKYAHYAPGLVGRQVRFAGLAGCVEAAVGGRSPAGLPAWLSEDC.

Catalysis depends on serine 66, which acts as the Proton acceptor.

It belongs to the AcnX family. As to quaternary structure, monomer. Requires Fe(3+) as cofactor.

It carries out the reaction cis-3-hydroxy-L-proline = 1-pyrroline-2-carboxylate + H2O. With respect to regulation, inhibited by Zn(2+), Cd(2+) and Hg(2+), but not by Co(2+), Ni(2+), Mn(2+), Sr(2+), Mg(2+), or Fe(3+). Inhibited by pyrrole-2-carboxylate and its derivative 2-thiophenecarboxylate, but not by trans-aconitate, fluorocitrate and oxalomalate, which are typical inhibitors of the aconitase enzymes. Its function is as follows. Catalyzes the dehydration of cis-3-hydroxy-L-proline (c3LHyp) to Delta(1)-pyrroline-2-carboxylate (Pyr2C). Also has activity with (2S,3S,4R)-3,4-dihydroxyproline as substrate, albeit at about 300-fold lower rate. No activity with L-proline, trans-4-hydroxy-L-proline (t4LHyp), cis-4-hydroxy-L-proline (c4LHyp), trans-3-hydroxy-L-proline (t3LHyp), D-proline, cis-4-hydroxy-D-proline (c4DHyp), trans-4-hydroxy-D-proline (t4DHyp) or L-serine as substrates. No hydro-lyase activity with citrate or cis-acotinate. Does not catalyze 2-epimerization of c3LHyp to trans-3-hydroxy-D-proline (t3DHyp). Involved in a degradation pathway that converts c3LHyp to L-proline, which would allow P.aeruginosa to grow on c3LHyp as a sole carbon source. The sequence is that of Cis-3-hydroxy-L-proline dehydratase from Pseudomonas aeruginosa (strain ATCC 15692 / DSM 22644 / CIP 104116 / JCM 14847 / LMG 12228 / 1C / PRS 101 / PAO1).